The sequence spans 47 residues: Large ribosomal subunit protein eL40 (47 aa).

The protein belongs to the eukaryotic ribosomal protein eL40 family.

The sequence is that of Large ribosomal subunit protein eL40 from Methanococcus vannielii (strain ATCC 35089 / DSM 1224 / JCM 13029 / OCM 148 / SB).